The primary structure comprises 241 residues: Exosome complex component RRP41 homolog (241 aa).

Residue Met1 is modified to N-acetylmethionine.

Belongs to the RNase PH family. As to quaternary structure, component of the RNA exosome complex. Interacts with RPP4.

It localises to the cytoplasm. The protein localises to the nucleus. The protein resides in the nucleolus. Functionally, non-catalytic component of the RNA exosome complex which has 3'-&gt;5' exoribonuclease activity and participates in a multitude of cellular RNA processing, maturation and degradation events. In vitro, is a processive phosphorolytic exonuclease and requires a single-stranded poly(A) tail on the substrate RNA for its activity. Can complement the growth defect of a yeast mutant lacking RRP41 exonuclease. Required for normal development of female gametophytes. This chain is Exosome complex component RRP41 homolog, found in Arabidopsis thaliana (Mouse-ear cress).